The chain runs to 326 residues: Pectate lyase plyB (326 aa).

The signal sequence occupies residues 1–15 (MRFTPLFLLAAVAIA). D133, D162, and D166 together coordinate Ca(2+). R219 is a catalytic residue.

This sequence belongs to the polysaccharide lyase 1 family. The cofactor is Ca(2+).

It localises to the secreted. It carries out the reaction Eliminative cleavage of (1-&gt;4)-alpha-D-galacturonan to give oligosaccharides with 4-deoxy-alpha-D-galact-4-enuronosyl groups at their non-reducing ends.. It functions in the pathway glycan metabolism; pectin degradation; 2-dehydro-3-deoxy-D-gluconate from pectin: step 2/5. In terms of biological role, pectinolytic enzyme consist of four classes of enzymes: pectin lyase, polygalacturonase, pectin methylesterase and rhamnogalacturonase. Among pectinolytic enzymes, pectin lyase is the most important in depolymerization of pectin, since it cleaves internal glycosidic bonds of highly methylated pectins. This chain is Pectate lyase plyB (plyB), found in Emericella nidulans (strain FGSC A4 / ATCC 38163 / CBS 112.46 / NRRL 194 / M139) (Aspergillus nidulans).